A 315-amino-acid polypeptide reads, in one-letter code: ATP synthase gamma chain (315 aa).

It belongs to the ATPase gamma chain family. F-type ATPases have 2 components, CF(1) - the catalytic core - and CF(0) - the membrane proton channel. CF(1) has five subunits: alpha(3), beta(3), gamma(1), delta(1), epsilon(1). CF(0) has three main subunits: a, b and c.

It is found in the cellular thylakoid membrane. Functionally, produces ATP from ADP in the presence of a proton gradient across the membrane. The gamma chain is believed to be important in regulating ATPase activity and the flow of protons through the CF(0) complex. This is ATP synthase gamma chain from Cyanothece sp. (strain PCC 7425 / ATCC 29141).